The primary structure comprises 356 residues: Tetraacyldisaccharide 4'-kinase (356 aa).

ATP is bound at residue 51-58 (GWGGSGKT).

It belongs to the LpxK family.

The catalysed reaction is a lipid A disaccharide + ATP = a lipid IVA + ADP + H(+). It participates in glycolipid biosynthesis; lipid IV(A) biosynthesis; lipid IV(A) from (3R)-3-hydroxytetradecanoyl-[acyl-carrier-protein] and UDP-N-acetyl-alpha-D-glucosamine: step 6/6. Functionally, transfers the gamma-phosphate of ATP to the 4'-position of a tetraacyldisaccharide 1-phosphate intermediate (termed DS-1-P) to form tetraacyldisaccharide 1,4'-bis-phosphate (lipid IVA). The sequence is that of Tetraacyldisaccharide 4'-kinase from Oleidesulfovibrio alaskensis (strain ATCC BAA-1058 / DSM 17464 / G20) (Desulfovibrio alaskensis).